We begin with the raw amino-acid sequence, 113 residues long: UPF0342 protein MGAS10750_Spy0713 (113 aa).

It belongs to the UPF0342 family.

This chain is UPF0342 protein MGAS10750_Spy0713, found in Streptococcus pyogenes serotype M4 (strain MGAS10750).